A 251-amino-acid chain; its full sequence is Aspartate/glutamate leucyltransferase (251 aa).

The protein belongs to the R-transferase family. Bpt subfamily.

The protein localises to the cytoplasm. The catalysed reaction is N-terminal L-glutamyl-[protein] + L-leucyl-tRNA(Leu) = N-terminal L-leucyl-L-glutamyl-[protein] + tRNA(Leu) + H(+). The enzyme catalyses N-terminal L-aspartyl-[protein] + L-leucyl-tRNA(Leu) = N-terminal L-leucyl-L-aspartyl-[protein] + tRNA(Leu) + H(+). In terms of biological role, functions in the N-end rule pathway of protein degradation where it conjugates Leu from its aminoacyl-tRNA to the N-termini of proteins containing an N-terminal aspartate or glutamate. In Nitrosospira multiformis (strain ATCC 25196 / NCIMB 11849 / C 71), this protein is Aspartate/glutamate leucyltransferase.